Here is a 55-residue protein sequence, read N- to C-terminus: Rubredoxin-2 (55 aa).

Residues 1-54 form the Rubredoxin-like domain; it reads MRKWQCVVCGFIYDEALGLPEEGIPAGTRWEDIPADWVCPDCGVGKIDFEMIEI. Cysteine 6, cysteine 9, cysteine 39, and cysteine 42 together coordinate Fe cation.

Belongs to the rubredoxin family. Requires Fe(3+) as cofactor.

Its subcellular location is the cytoplasm. The protein operates within hydrocarbon metabolism; alkane degradation. Functionally, involved in the hydrocarbon hydroxylating system, which transfers electrons from NADH to rubredoxin reductase and then through rubredoxin to alkane 1 monooxygenase. This chain is Rubredoxin-2 (rubA2), found in Pseudomonas aeruginosa (strain ATCC 15692 / DSM 22644 / CIP 104116 / JCM 14847 / LMG 12228 / 1C / PRS 101 / PAO1).